The primary structure comprises 263 residues: Energy-coupling factor transporter transmembrane protein EcfT (263 aa).

Transmembrane regions (helical) follow at residues 22-42 (IIFAFCFIPLVFLANNAATNI), 69-89 (ILFLIIFTFIIQLLFTREGAV), 105-125 (LAIIVSLRFFYLVSITTLVTL), and 243-263 (TGLILLLVALGLLLVYLRGGF).

The protein belongs to the energy-coupling factor EcfT family. Forms a stable energy-coupling factor (ECF) transporter complex composed of 2 membrane-embedded substrate-binding proteins (S component), 2 ATP-binding proteins (A component) and 2 transmembrane proteins (T component). May be able to interact with more than 1 S component at a time.

The protein resides in the cell membrane. Functionally, transmembrane (T) component of an energy-coupling factor (ECF) ABC-transporter complex. Unlike classic ABC transporters this ECF transporter provides the energy necessary to transport a number of different substrates. In Exiguobacterium sibiricum (strain DSM 17290 / CCUG 55495 / CIP 109462 / JCM 13490 / 255-15), this protein is Energy-coupling factor transporter transmembrane protein EcfT.